We begin with the raw amino-acid sequence, 214 residues long: NKG2-D type II integral membrane protein (214 aa).

Topologically, residues 1 to 56 (MGWIRDRRSPSSMEIRELHNRDVINRGAFKSRQKRTQTLITSKCGENPSPFFLARS) are cytoplasmic. Residues 57 to 77 (IAIAMGIRFIVMVMIYSGMII) form a helical; Signal-anchor for type II membrane protein membrane-spanning segment. The Extracellular segment spans residues 78-214 (NLLFNQEAPS…NTYICMKRTV (137 aa)). 2 cysteine pairs are disulfide-bonded: C94/C103 and C97/C108. The region spanning 98–210 (PKNWICYRNS…CLTLNTYICM (113 aa)) is the C-type lectin domain. N-linked (GlcNAc...) asparagine glycosylation is found at N113, N129, N161, and N184. 2 disulfides stabilise this stretch: C125-C209 and C187-C201.

Homodimer; disulfide-linked. Heterohexamer composed of two subunits of KLRK1 and four subunits of HCST/DAP10. Interacts (via transmembrane domain) with HCST/DAP10 (via transmembrane domain); the interaction is required for KLRK1 NK cell surface and induces NK cell-mediated cytotoxicity. Can form disulfide-bonded heterodimer with CD94. Interacts with CEACAM1; recruits PTPN6 that dephosphorylates VAV1. Detected in peripheral blood leukocytes, macrophages, monocytes and natural killer cells.

The protein resides in the cell membrane. Functions as an activating and costimulatory receptor involved in immunosurveillance upon binding to various cellular stress-inducible ligands displayed at the surface of autologous tumor cells and virus-infected cells. Provides both stimulatory and costimulatory innate immune responses on activated killer (NK) cells, leading to cytotoxic activity. Acts as a costimulatory receptor for T-cell receptor (TCR) in CD8(+) T-cell-mediated adaptive immune responses by amplifying T-cell activation. Stimulates perforin-mediated elimination of ligand-expressing tumor cells. Signaling involves calcium influx, culminating in the expression of TNF-alpha. Participates in NK cell-mediated bone marrow graft rejection. May play a regulatory role in differentiation and survival of NK cells. Binds to ligands belonging to various subfamilies of MHC class I-related glycoproteins. The chain is NKG2-D type II integral membrane protein (KLRK1) from Sus scrofa (Pig).